The following is a 1021-amino-acid chain: PDZ domain-containing protein 7 (1021 aa).

PDZ domains lie at 86-156 and 210-279; these read AVRV…LTSS and IVHL…EVLK. The span at 324 to 344 shows a compositional bias: low complexity; sequence SSSSVSSYASSAPCSSGSLPS. 3 disordered regions span residues 324–345, 431–495, and 724–814; these read SSSS…LPSD, ITRS…DSRS, and RRGA…HRPR. A compositionally biased stretch (pro residues) spans 729–744; sequence APPPQPPPVAPRPPRP. The span at 758–767 shows a compositional bias: polar residues; the sequence is QQNQSQTPAQ. Over residues 772–794 the composition is skewed to basic residues; that stretch reads SRSRSRSRSHSRGQGKSPGRRRS. Over residues 799–808 the composition is skewed to low complexity; it reads PIATAATANG. The PDZ 3 domain occupies 858-930; sequence TITLSKMKQS…QRAVDTIRRA (73 aa). Positions 992-1021 are disordered; it reads QLQQSLSSALKVPQSIPKLSPILKDPHDPS.

In terms of assembly, homodimerizes (via PDZ2 domain). Component of USH2 complex, composed of ADGRV1, PDZD7, USH2A and WHRN. Interacts (via PDZ domains) with WHRN; the interaction is direct. Interacts with USH1G. Interacts with ADGRV1 (via the cytoplasmic region). Interacts with USH2A (via the cytoplasmic region). Interacts with MYO7A (via MyTH4-FERM domains). Isoform 1 is expressed in developing and adult cochlea but not retina. Isoform 2 is expressed in developing and adult cochlea and retina. Isoform 3 is expressed in adult cochlea and retina. Isoform 4 is expressed in retina and developing cochlea but not adult cochlea. Isoform 5 is expressed in adult cochlea but not in developing cochlea or retina.

The protein localises to the cell projection. It is found in the cilium. It localises to the nucleus. Its subcellular location is the stereocilium. In cochlear developing hair cells, essential in organizing the USH2 complex at stereocilia ankle links. Blocks inhibition of adenylate cyclase activity mediated by ADGRV1. This is PDZ domain-containing protein 7 from Mus musculus (Mouse).